The sequence spans 498 residues: Mitogen-activated protein kinase 15 (498 aa).

Residues 13–304 form the Protein kinase domain; the sequence is YKIEEVIGKG…AEEALADPYF (292 aa). ATP-binding positions include 19-27 and Lys42; that span reads IGKGSYGVV. Catalysis depends on Asp139, which acts as the Proton acceptor. The residue at position 175 (Thr175) is a Phosphothreonine. The TXY motif lies at 175-177; sequence TDY. Position 177 is a phosphotyrosine (Tyr177). 2 disordered regions span residues 388–411 and 470–498; these read STAA…SDDR and STAE…GSYP. Over residues 486–498 the composition is skewed to polar residues; it reads LATNTVSPRGSYP.

It belongs to the protein kinase superfamily. CMGC Ser/Thr protein kinase family. MAP kinase subfamily. In terms of processing, dually phosphorylated on Thr-175 and Tyr-177, which activates the enzyme.

The catalysed reaction is L-seryl-[protein] + ATP = O-phospho-L-seryl-[protein] + ADP + H(+). The enzyme catalyses L-threonyl-[protein] + ATP = O-phospho-L-threonyl-[protein] + ADP + H(+). Its activity is regulated as follows. Activated by threonine and tyrosine phosphorylation. This Oryza sativa subsp. japonica (Rice) protein is Mitogen-activated protein kinase 15 (MPK15).